A 465-amino-acid chain; its full sequence is 28S rRNA (cytosine-C(5))-methyltransferase (465 aa).

G2 carries the post-translational modification N-acetylglycine. Residue S167 is modified to Phosphoserine. Residues 234 to 240, D258, R263, and D305 contribute to the S-adenosyl-L-methionine site; that span reads CAAPGNK. C359 serves as the catalytic Nucleophile. Residues 430 to 465 are disordered; the sequence is TPAPQTDAMDPEPLSQVPKRKRRRKAAVGASMQPST.

The protein belongs to the class I-like SAM-binding methyltransferase superfamily. RsmB/NOP family. In the hippocampus, specifically expressed in adult hippocampal NG2-positive oligodendrocyte precursor cells (at protein level).

It localises to the nucleus. The protein resides in the nucleolus. The catalysed reaction is a cytidine in 28S rRNA + S-adenosyl-L-methionine = a 5-methylcytidine in 28S rRNA + S-adenosyl-L-homocysteine + H(+). Its function is as follows. S-adenosyl-L-methionine-dependent methyltransferase that specifically methylates the C(5) position of cytosine 3438 (m5C3438) in 28S rRNA. m5C3782 promotes protein translation without affecting ribosome biogenesis and fidelity. Required for corpus callosum and cerebral cortex development. The polypeptide is 28S rRNA (cytosine-C(5))-methyltransferase (Mus musculus (Mouse)).